The following is a 211-amino-acid chain: Uracil phosphoribosyltransferase (211 aa).

5-phospho-alpha-D-ribose 1-diphosphate is bound by residues arginine 78, arginine 103, and 130–138 (DPMLATGGT). Uracil contacts are provided by residues isoleucine 195 and 200–202 (GDA). Residue aspartate 201 coordinates 5-phospho-alpha-D-ribose 1-diphosphate.

This sequence belongs to the UPRTase family. It depends on Mg(2+) as a cofactor.

It catalyses the reaction UMP + diphosphate = 5-phospho-alpha-D-ribose 1-diphosphate + uracil. It functions in the pathway pyrimidine metabolism; UMP biosynthesis via salvage pathway; UMP from uracil: step 1/1. Allosterically activated by GTP. Functionally, catalyzes the conversion of uracil and 5-phospho-alpha-D-ribose 1-diphosphate (PRPP) to UMP and diphosphate. The chain is Uracil phosphoribosyltransferase from Pseudarthrobacter chlorophenolicus (strain ATCC 700700 / DSM 12829 / CIP 107037 / JCM 12360 / KCTC 9906 / NCIMB 13794 / A6) (Arthrobacter chlorophenolicus).